The following is an 86-amino-acid chain: Short neurotoxin homolog NTL4 (86 aa).

Residues 1–21 (MKTLLLTLVVVTIICLDLGYT) form the signal peptide. Intrachain disulfides connect cysteine 24/cysteine 45, cysteine 38/cysteine 63, cysteine 67/cysteine 78, and cysteine 79/cysteine 84.

The protein belongs to the three-finger toxin family. Short-chain subfamily. Orphan group III sub-subfamily. In terms of tissue distribution, expressed by the venom gland.

It localises to the secreted. In Bungarus multicinctus (Many-banded krait), this protein is Short neurotoxin homolog NTL4.